A 197-amino-acid chain; its full sequence is uncharacterized protein (197 aa).

Residues 103-123 (LAIVLPVLANLIMCAMLAWYL) form a helical membrane-spanning segment.

It localises to the host membrane. This is an uncharacterized protein from Equus caballus (Horse).